A 555-amino-acid chain; its full sequence is Formate--tetrahydrofolate ligase (555 aa).

An ATP-binding site is contributed by 63–70 (TPAGEGKT).

Belongs to the formate--tetrahydrofolate ligase family.

It catalyses the reaction (6S)-5,6,7,8-tetrahydrofolate + formate + ATP = (6R)-10-formyltetrahydrofolate + ADP + phosphate. Its pathway is one-carbon metabolism; tetrahydrofolate interconversion. This chain is Formate--tetrahydrofolate ligase, found in Beijerinckia indica subsp. indica (strain ATCC 9039 / DSM 1715 / NCIMB 8712).